Consider the following 244-residue polypeptide: Glucosamine-6-phosphate deaminase (244 aa).

D67 acts as the Proton acceptor; for enolization step in catalysis. Catalysis depends on N133, which acts as the For ring-opening step. H135 serves as the catalytic Proton acceptor; for ring-opening step. The For ring-opening step role is filled by E140.

This sequence belongs to the glucosamine/galactosamine-6-phosphate isomerase family. NagB subfamily.

The catalysed reaction is alpha-D-glucosamine 6-phosphate + H2O = beta-D-fructose 6-phosphate + NH4(+). Its pathway is amino-sugar metabolism; N-acetylneuraminate degradation; D-fructose 6-phosphate from N-acetylneuraminate: step 5/5. Functionally, catalyzes the reversible isomerization-deamination of glucosamine 6-phosphate (GlcN6P) to form fructose 6-phosphate (Fru6P) and ammonium ion. The chain is Glucosamine-6-phosphate deaminase from Mycoplasma mycoides subsp. mycoides SC (strain CCUG 32753 / NCTC 10114 / PG1).